A 332-amino-acid polypeptide reads, in one-letter code: NH(3)-dependent NAD(+) synthetase (332 aa).

48 to 55 (GLSGGVDS) serves as a coordination point for ATP. A Mg(2+)-binding site is contributed by D54. R184 contacts deamido-NAD(+). An ATP-binding site is contributed by T204. E209 contacts Mg(2+). Deamido-NAD(+) contacts are provided by K217 and D224. The ATP site is built by K233 and T255.

It belongs to the NAD synthetase family. In terms of assembly, homodimer.

The catalysed reaction is deamido-NAD(+) + NH4(+) + ATP = AMP + diphosphate + NAD(+) + H(+). Its pathway is cofactor biosynthesis; NAD(+) biosynthesis; NAD(+) from deamido-NAD(+) (ammonia route): step 1/1. Catalyzes the ATP-dependent amidation of deamido-NAD to form NAD. Uses ammonia as a nitrogen source. This Rhizobium rhizogenes (strain K84 / ATCC BAA-868) (Agrobacterium radiobacter) protein is NH(3)-dependent NAD(+) synthetase.